A 378-amino-acid polypeptide reads, in one-letter code: O-methyltransferase dpfgI (378 aa).

Residues 232–233 (GG), Asp-257, 279–280 (NF), and Arg-295 contribute to the S-adenosyl-L-methionine site. Catalysis depends on His-299, which acts as the Proton acceptor.

The protein belongs to the class I-like SAM-binding methyltransferase superfamily. Cation-independent O-methyltransferase family.

It participates in secondary metabolite biosynthesis; terpenoid biosynthesis. O-methyltransferase; part of the gene cluster that mediates the biosynthesis of diterpenoid pyrones. The first step of the pathway is the synthesis of the alpha-pyrone moiety by the polyketide synthase dpfgA via condensation of one acetyl-CoA starter unit with 3 malonyl-CoA units and 2 methylations. The alpha-pyrone is then combined with geranylgeranyl pyrophosphate (GGPP) formed by the GGPP synthase dpfgD through the action of the prenyltransferase dpfgC to yield a linear alpha-pyrone diterpenoid. Subsequent steps in the diterpenoid pyrone biosynthetic pathway involve the decalin core formation, which is initiated by the epoxidation of the C10-C11 olefin by the FAD-dependent oxidoreductase dpfgE, and is followed by a cyclization cascade catalyzed by the terpene cyclase dpfgB. The short chain dehydrogenase/reductase dpfgG then oxidizes the 8S hydroxy group to a ketone and the short chain dehydrogenase/reductase dpfgH reduces the ketone to the 8R hydroxy group to yield higginsianin B. Higginsianin B is further methylated by the methyltransferase dpfgI to produce the intermediate named FDDP B. The cytochrome P450 monooxygenase dfgpJ then catalyzes a three-step oxidation at C-27 to generate a carboxylic acid as well as C-26 hydroxylation. Finally, methyltransferase dpfgK methylates the carboxylic acid generated by dpfgJ, yielding the final diterpenoid pyrones from the pathway which were named FDDP D and FDDP E. The sequence is that of O-methyltransferase dpfgI from Gibberella zeae (strain ATCC MYA-4620 / CBS 123657 / FGSC 9075 / NRRL 31084 / PH-1) (Wheat head blight fungus).